Consider the following 144-residue polypeptide: MLVPKRVKFRRVHRGKLRGEAKGGKSVAFGDYGLQALDSHWISNRQIEAARVAITRYMKRGGKVWIKIFPHKSYTAKGVGVRMGNGKGTPDGWVAPVKRGKVMFEVGGVSEEVAREALRLAAMKLPVRTKVLSREEVGGESNED.

This sequence belongs to the universal ribosomal protein uL16 family. In terms of assembly, part of the 50S ribosomal subunit.

In terms of biological role, binds 23S rRNA and is also seen to make contacts with the A and possibly P site tRNAs. This Levilactobacillus brevis (strain ATCC 367 / BCRC 12310 / CIP 105137 / JCM 1170 / LMG 11437 / NCIMB 947 / NCTC 947) (Lactobacillus brevis) protein is Large ribosomal subunit protein uL16.